Reading from the N-terminus, the 124-residue chain is Small ribosomal subunit protein eS6 (124 aa).

This sequence belongs to the eukaryotic ribosomal protein eS6 family.

The polypeptide is Small ribosomal subunit protein eS6 (Methanococcus maripaludis (strain C5 / ATCC BAA-1333)).